The chain runs to 384 residues: MTKPATTPAILALADGSIFRGESIGADGQTIGEVVFNTAMTGYQEILTDPSYAKQIVTLTYPHVGNTGTTPQDAESWKVWAAGLVIRDLPLLASNWRNKQSLPDYLKENDTVAIAGIDTRRLTRILREKGAQNGCILAGADATEEKALELARSFPGLKGMDLAKEVSVKERYEWRYSLWNLETDSHPEIPASELPYHVVAYDYGVKYNILRMLVARGCRVTVLPAQTPASEALALNPDGIFLANGPGDPEPCDYAIRAIQEVLETDIPVFGICLGHQLLALASGAITVKMPSGHHGANHPVQDLETGVVMITSQNHGFCADEASLPANLRATHKSLFDGTLQGIERTDKVAFGFQGHPEASPGPCDVAPLFDRFISAMAPVVDR.

A CPSase region spans residues 1–193 (MTKPATTPAI…DSHPEIPASE (193 aa)). Residues serine 51, glycine 245, and glycine 247 each contribute to the L-glutamine site. The 188-residue stretch at 197–384 (HVVAYDYGVK…ISAMAPVVDR (188 aa)) folds into the Glutamine amidotransferase type-1 domain. The active-site Nucleophile is cysteine 273. The L-glutamine site is built by leucine 274, glutamine 277, asparagine 315, glycine 317, and phenylalanine 318. Residues histidine 357 and glutamate 359 contribute to the active site.

The protein belongs to the CarA family. Composed of two chains; the small (or glutamine) chain promotes the hydrolysis of glutamine to ammonia, which is used by the large (or ammonia) chain to synthesize carbamoyl phosphate. Tetramer of heterodimers (alpha,beta)4.

It catalyses the reaction hydrogencarbonate + L-glutamine + 2 ATP + H2O = carbamoyl phosphate + L-glutamate + 2 ADP + phosphate + 2 H(+). It carries out the reaction L-glutamine + H2O = L-glutamate + NH4(+). The protein operates within amino-acid biosynthesis; L-arginine biosynthesis; carbamoyl phosphate from bicarbonate: step 1/1. It participates in pyrimidine metabolism; UMP biosynthesis via de novo pathway; (S)-dihydroorotate from bicarbonate: step 1/3. In terms of biological role, small subunit of the glutamine-dependent carbamoyl phosphate synthetase (CPSase). CPSase catalyzes the formation of carbamoyl phosphate from the ammonia moiety of glutamine, carbonate, and phosphate donated by ATP, constituting the first step of 2 biosynthetic pathways, one leading to arginine and/or urea and the other to pyrimidine nucleotides. The small subunit (glutamine amidotransferase) binds and cleaves glutamine to supply the large subunit with the substrate ammonia. The polypeptide is Carbamoyl phosphate synthase small chain (Stutzerimonas stutzeri (Pseudomonas stutzeri)).